The following is a 211-amino-acid chain: Pyridoxine/pyridoxamine 5'-phosphate oxidase (211 aa).

Residues 7–10 (RREY) and K65 contribute to the substrate site. FMN-binding positions include 60-65 (RTVLLK), 75-76 (YT), R81, K82, and Q104. The substrate site is built by Y122, R126, and S130. FMN contacts are provided by residues 139 to 140 (QS) and W184. Substrate is bound at residue 190–192 (RLH). Residue R194 coordinates FMN.

Belongs to the pyridoxamine 5'-phosphate oxidase family. As to quaternary structure, homodimer. FMN serves as cofactor.

The catalysed reaction is pyridoxamine 5'-phosphate + O2 + H2O = pyridoxal 5'-phosphate + H2O2 + NH4(+). It carries out the reaction pyridoxine 5'-phosphate + O2 = pyridoxal 5'-phosphate + H2O2. Its pathway is cofactor metabolism; pyridoxal 5'-phosphate salvage; pyridoxal 5'-phosphate from pyridoxamine 5'-phosphate: step 1/1. It functions in the pathway cofactor metabolism; pyridoxal 5'-phosphate salvage; pyridoxal 5'-phosphate from pyridoxine 5'-phosphate: step 1/1. Catalyzes the oxidation of either pyridoxine 5'-phosphate (PNP) or pyridoxamine 5'-phosphate (PMP) into pyridoxal 5'-phosphate (PLP). In Aeromonas hydrophila subsp. hydrophila (strain ATCC 7966 / DSM 30187 / BCRC 13018 / CCUG 14551 / JCM 1027 / KCTC 2358 / NCIMB 9240 / NCTC 8049), this protein is Pyridoxine/pyridoxamine 5'-phosphate oxidase.